The primary structure comprises 291 residues: ATP synthase gamma chain 2 (291 aa).

The interval 187–208 (LLPHPDKDESQDSKPNDATSRW) is disordered. Basic and acidic residues predominate over residues 190-201 (HPDKDESQDSKP).

This sequence belongs to the ATPase gamma chain family. As to quaternary structure, F-type ATPases have 2 components, CF(1) - the catalytic core - and CF(0) - the membrane proton channel. CF(1) has five subunits: alpha(3), beta(3), gamma(1), delta(1), epsilon(1). CF(0) has three main subunits: a, b and c.

The protein localises to the cell inner membrane. In terms of biological role, produces ATP from ADP in the presence of a proton gradient across the membrane. The gamma chain is believed to be important in regulating ATPase activity and the flow of protons through the CF(0) complex. This is ATP synthase gamma chain 2 from Photobacterium profundum (strain SS9).